The sequence spans 61 residues: Potassium channel toxin alpha-KTx 6.6 (61 aa).

The N-terminal stretch at 1–23 (MNAKFILLLLVVATTMLLPDTQG) is a signal peptide. 4 disulfides stabilise this stretch: Cys-29-Cys-50, Cys-35-Cys-55, Cys-39-Cys-57, and Cys-45-Cys-60. Cys-60 carries the cysteine amide modification.

It belongs to the short scorpion toxin superfamily. Potassium channel inhibitor family. Alpha-KTx 06 subfamily. In terms of tissue distribution, expressed by the venom gland.

It localises to the secreted. Functionally, blocker of voltage-gated potassium channels. This is Potassium channel toxin alpha-KTx 6.6 from Opistophthalmus carinatus (African yellow leg scorpion).